We begin with the raw amino-acid sequence, 130 residues long: Large ribosomal subunit protein bL17 (130 aa).

It belongs to the bacterial ribosomal protein bL17 family. Part of the 50S ribosomal subunit. Contacts protein L32.

The protein is Large ribosomal subunit protein bL17 of Shewanella loihica (strain ATCC BAA-1088 / PV-4).